The chain runs to 160 residues: Transcription antitermination protein NusB (160 aa).

Belongs to the NusB family.

Involved in transcription antitermination. Required for transcription of ribosomal RNA (rRNA) genes. Binds specifically to the boxA antiterminator sequence of the ribosomal RNA (rrn) operons. The sequence is that of Transcription antitermination protein NusB from Rhizobium johnstonii (strain DSM 114642 / LMG 32736 / 3841) (Rhizobium leguminosarum bv. viciae).